The following is a 212-amino-acid chain: Adenylate kinase (212 aa).

10 to 15 contacts ATP; it reads GAGKGT. Residues 30-59 are NMP; that stretch reads AIGDIFRAIIKTSSKDAEVINSYVEQGKLI. AMP contacts are provided by residues arginine 36, 57–59, 85–88, and glutamine 92; these read KLI and GYPR. The segment at 122–160 is LID; it reads GRYSCKSCGKIYNDYFLKPRIDKICDVCKSSVFEYRKDD. Arginine 123 contacts ATP. Zn(2+) is bound by residues cysteine 126 and cysteine 129. 132–133 provides a ligand contact to ATP; sequence IY. The Zn(2+) site is built by cysteine 146 and cysteine 149. Positions 157 and 168 each coordinate AMP. Lysine 196 contacts ATP.

The protein belongs to the adenylate kinase family. In terms of assembly, monomer.

It is found in the cytoplasm. The enzyme catalyses AMP + ATP = 2 ADP. It participates in purine metabolism; AMP biosynthesis via salvage pathway; AMP from ADP: step 1/1. Functionally, catalyzes the reversible transfer of the terminal phosphate group between ATP and AMP. Plays an important role in cellular energy homeostasis and in adenine nucleotide metabolism. In Rickettsia bellii (strain RML369-C), this protein is Adenylate kinase.